The primary structure comprises 402 residues: Argininosuccinate synthase (402 aa).

An ATP-binding site is contributed by 9–17; it reads AYSGGLDTS. Y87 lines the L-citrulline pocket. Residue G117 participates in ATP binding. L-aspartate is bound by residues T119, N123, and D124. N123 serves as a coordination point for L-citrulline. Positions 127, 176, 185, 261, and 273 each coordinate L-citrulline.

This sequence belongs to the argininosuccinate synthase family. Type 1 subfamily. In terms of assembly, homotetramer.

It is found in the cytoplasm. The enzyme catalyses L-citrulline + L-aspartate + ATP = 2-(N(omega)-L-arginino)succinate + AMP + diphosphate + H(+). It functions in the pathway amino-acid biosynthesis; L-arginine biosynthesis; L-arginine from L-ornithine and carbamoyl phosphate: step 2/3. This is Argininosuccinate synthase from Chlorobium phaeobacteroides (strain BS1).